Consider the following 103-residue polypeptide: Small ribosomal subunit protein uS10 (103 aa).

The protein belongs to the universal ribosomal protein uS10 family. Part of the 30S ribosomal subunit.

Involved in the binding of tRNA to the ribosomes. This chain is Small ribosomal subunit protein uS10, found in Alcanivorax borkumensis (strain ATCC 700651 / DSM 11573 / NCIMB 13689 / SK2).